A 341-amino-acid polypeptide reads, in one-letter code: Phenylalanine--tRNA ligase alpha subunit (341 aa).

Mg(2+) is bound at residue glutamate 256.

This sequence belongs to the class-II aminoacyl-tRNA synthetase family. Phe-tRNA synthetase alpha subunit type 1 subfamily. Tetramer of two alpha and two beta subunits. The cofactor is Mg(2+).

The protein localises to the cytoplasm. The enzyme catalyses tRNA(Phe) + L-phenylalanine + ATP = L-phenylalanyl-tRNA(Phe) + AMP + diphosphate + H(+). The sequence is that of Phenylalanine--tRNA ligase alpha subunit from Leptospira biflexa serovar Patoc (strain Patoc 1 / Ames).